The chain runs to 390 residues: Anhydro-N-acetylmuramic acid kinase (390 aa).

9 to 16 (GTSLDGID) contacts ATP.

It belongs to the anhydro-N-acetylmuramic acid kinase family.

It catalyses the reaction 1,6-anhydro-N-acetyl-beta-muramate + ATP + H2O = N-acetyl-D-muramate 6-phosphate + ADP + H(+). It functions in the pathway amino-sugar metabolism; 1,6-anhydro-N-acetylmuramate degradation. Its pathway is cell wall biogenesis; peptidoglycan recycling. In terms of biological role, catalyzes the specific phosphorylation of 1,6-anhydro-N-acetylmuramic acid (anhMurNAc) with the simultaneous cleavage of the 1,6-anhydro ring, generating MurNAc-6-P. Is required for the utilization of anhMurNAc either imported from the medium or derived from its own cell wall murein, and thus plays a role in cell wall recycling. The chain is Anhydro-N-acetylmuramic acid kinase from Bacillus cereus (strain B4264).